The following is a 247-amino-acid chain: uncharacterized protein (247 aa).

The protein localises to the mitochondrion. This is an uncharacterized protein from Schizosaccharomyces pombe (strain 972 / ATCC 24843) (Fission yeast).